We begin with the raw amino-acid sequence, 78 residues long: MSRVCQVTGKRPTVGNNRSHARNATRRRFLPNLQTHRFWVESESRFVKLRLSAKGMRIIDKKGIDSVLTDIRARGEKI.

The segment at 1 to 25 is disordered; that stretch reads MSRVCQVTGKRPTVGNNRSHARNAT.

This sequence belongs to the bacterial ribosomal protein bL28 family.

The chain is Large ribosomal subunit protein bL28 from Alteromonas mediterranea (strain DSM 17117 / CIP 110805 / LMG 28347 / Deep ecotype).